Consider the following 140-residue polypeptide: Lysozyme c-1 (140 aa).

The first 20 residues, 1-20 (MKVFSTVLLAIVACCAVAEA), serve as a signal peptide directing secretion. The C-type lysozyme domain occupies 21–140 (KTFGKCELAK…KKLPNVSSCF (120 aa)). Disulfide bonds link cysteine 26/cysteine 139, cysteine 47/cysteine 128, cysteine 81/cysteine 94, and cysteine 90/cysteine 108. Residues glutamate 52 and aspartate 69 contribute to the active site.

Belongs to the glycosyl hydrolase 22 family. As to expression, expressed in salivary glands and Malpighian tubules.

It catalyses the reaction Hydrolysis of (1-&gt;4)-beta-linkages between N-acetylmuramic acid and N-acetyl-D-glucosamine residues in a peptidoglycan and between N-acetyl-D-glucosamine residues in chitodextrins.. Functionally, lysozymes have primarily a bacteriolytic function; those in tissues and body fluids are associated with the monocyte-macrophage system and enhance the activity of immunoagents. The protein is Lysozyme c-1 of Anopheles gambiae (African malaria mosquito).